The chain runs to 125 residues: Small ribosomal subunit protein uS13 (125 aa).

Belongs to the universal ribosomal protein uS13 family. As to quaternary structure, part of the 30S ribosomal subunit. Forms a loose heterodimer with protein S19. Forms two bridges to the 50S subunit in the 70S ribosome.

Functionally, located at the top of the head of the 30S subunit, it contacts several helices of the 16S rRNA. In the 70S ribosome it contacts the 23S rRNA (bridge B1a) and protein L5 of the 50S subunit (bridge B1b), connecting the 2 subunits; these bridges are implicated in subunit movement. Contacts the tRNAs in the A and P-sites. In Rickettsia prowazekii (strain Madrid E), this protein is Small ribosomal subunit protein uS13.